Reading from the N-terminus, the 175-residue chain is MHQVVCATTNPAKIQAILQAFHEIFGEGSCHIASVAVESGVPEQPFGSEETRAGARNRVANARRLLPEADFWVAIEAGIDGDSTFSWVVIENTSQRGEARSATLPLPAVILEKVREGEALGPVMSRYTGIDEIGRKEGAIGVFTAGKLTRTSVYHQAVILALSPFHNAVYQPLQA.

A substrate-binding site is contributed by 8 to 13; the sequence is TTNPAK. 2 residues coordinate Mg(2+): Glu38 and Glu68. 68-69 contributes to the substrate binding site; it reads EA.

Belongs to the YjjX NTPase family. Homodimer. The cofactor is Mg(2+). Mn(2+) is required as a cofactor.

It catalyses the reaction XTP + H2O = XDP + phosphate + H(+). The catalysed reaction is ITP + H2O = IDP + phosphate + H(+). Functionally, phosphatase that hydrolyzes non-canonical purine nucleotides such as XTP and ITP to their respective diphosphate derivatives. Probably excludes non-canonical purines from DNA/RNA precursor pool, thus preventing their incorporation into DNA/RNA and avoiding chromosomal lesions. The sequence is that of Inosine/xanthosine triphosphatase (yjjX) from Escherichia coli O127:H6 (strain E2348/69 / EPEC).